Consider the following 222-residue polypeptide: Thiol:disulfide interchange protein DsbL (222 aa).

Positions 1–27 (MSKLGISSLFKTILLTAALAVSFTASA) are cleaved as a signal peptide. A Thioredoxin domain is found at 28–221 (FTEGTDYMVL…MADLIRELAS (194 aa)). Residues C56 and C59 are joined by a disulfide bond.

This sequence belongs to the thioredoxin family. DsbL subfamily. As to quaternary structure, interacts with DsbI.

The protein localises to the periplasm. In terms of biological role, involved in disulfide-bond formation. Acts by transferring its disulfide bond to other proteins. Part of a redox system composed of DsbI and DsbL that mediates formation of an essential disulfide bond in AssT. The protein is Thiol:disulfide interchange protein DsbL of Escherichia coli O6:H1 (strain CFT073 / ATCC 700928 / UPEC).